Reading from the N-terminus, the 504-residue chain is Maturase K (504 aa).

The protein belongs to the intron maturase 2 family. MatK subfamily.

It localises to the plastid. The protein resides in the chloroplast. In terms of biological role, usually encoded in the trnK tRNA gene intron. Probably assists in splicing its own and other chloroplast group II introns. This Quercus lyrata (Overcup oak) protein is Maturase K.